Here is a 326-residue protein sequence, read N- to C-terminus: Acetyl-coenzyme A carboxylase carboxyl transferase subunit alpha (326 aa).

The 254-residue stretch at 45-298 folds into the CoA carboxyltransferase C-terminal domain; it reads LEARAMQLRE…KQVLLENLDE (254 aa).

The protein belongs to the AccA family. Acetyl-CoA carboxylase is a heterohexamer composed of biotin carboxyl carrier protein (AccB), biotin carboxylase (AccC) and two subunits each of ACCase subunit alpha (AccA) and ACCase subunit beta (AccD).

It is found in the cytoplasm. The catalysed reaction is N(6)-carboxybiotinyl-L-lysyl-[protein] + acetyl-CoA = N(6)-biotinyl-L-lysyl-[protein] + malonyl-CoA. It participates in lipid metabolism; malonyl-CoA biosynthesis; malonyl-CoA from acetyl-CoA: step 1/1. In terms of biological role, component of the acetyl coenzyme A carboxylase (ACC) complex. First, biotin carboxylase catalyzes the carboxylation of biotin on its carrier protein (BCCP) and then the CO(2) group is transferred by the carboxyltransferase to acetyl-CoA to form malonyl-CoA. The chain is Acetyl-coenzyme A carboxylase carboxyl transferase subunit alpha from Nostoc punctiforme (strain ATCC 29133 / PCC 73102).